Here is a 639-residue protein sequence, read N- to C-terminus: Threonine--tRNA ligase (639 aa).

The TGS domain occupies Met1 to Thr61. Residues Asp242–Pro533 form a catalytic region. Zn(2+)-binding residues include Cys333, His384, and His510.

This sequence belongs to the class-II aminoacyl-tRNA synthetase family. In terms of assembly, homodimer. Requires Zn(2+) as cofactor.

Its subcellular location is the cytoplasm. The enzyme catalyses tRNA(Thr) + L-threonine + ATP = L-threonyl-tRNA(Thr) + AMP + diphosphate + H(+). In terms of biological role, catalyzes the attachment of threonine to tRNA(Thr) in a two-step reaction: L-threonine is first activated by ATP to form Thr-AMP and then transferred to the acceptor end of tRNA(Thr). Also edits incorrectly charged L-seryl-tRNA(Thr). In Verminephrobacter eiseniae (strain EF01-2), this protein is Threonine--tRNA ligase.